A 715-amino-acid chain; its full sequence is uncharacterized protein (715 aa).

4 disordered regions span residues 192–216, 300–348, 461–481, and 580–630; these read ASSV…SVTA, NEEV…TSKR, ASSS…RSNE, and FTVS…KPPK. Positions 202–213 are enriched in low complexity; sequence NNTSPYPPSNSS. 2 stretches are compositionally biased toward polar residues: residues 301–326 and 472–481; these read EEVS…NKND and HLGTSLRSNE. The segment covering 601–614 has biased composition (low complexity); it reads TDSSPSDTISSSPT.

This is an uncharacterized protein from Schizosaccharomyces pombe (strain 972 / ATCC 24843) (Fission yeast).